The chain runs to 89 residues: Small ribosomal subunit protein uS15 (89 aa).

Belongs to the universal ribosomal protein uS15 family. Part of the 30S ribosomal subunit. Forms a bridge to the 50S subunit in the 70S ribosome, contacting the 23S rRNA.

In terms of biological role, one of the primary rRNA binding proteins, it binds directly to 16S rRNA where it helps nucleate assembly of the platform of the 30S subunit by binding and bridging several RNA helices of the 16S rRNA. Forms an intersubunit bridge (bridge B4) with the 23S rRNA of the 50S subunit in the ribosome. The protein is Small ribosomal subunit protein uS15 of Buchnera aphidicola subsp. Acyrthosiphon pisum (strain 5A).